Here is a 193-residue protein sequence, read N- to C-terminus: Peptidyl-tRNA hydrolase (193 aa).

Tyr-17 lines the tRNA pocket. Catalysis depends on His-22, which acts as the Proton acceptor. TRNA is bound by residues Tyr-68, Asn-70, and Asn-116.

It belongs to the PTH family. In terms of assembly, monomer.

It is found in the cytoplasm. It carries out the reaction an N-acyl-L-alpha-aminoacyl-tRNA + H2O = an N-acyl-L-amino acid + a tRNA + H(+). Hydrolyzes ribosome-free peptidyl-tRNAs (with 1 or more amino acids incorporated), which drop off the ribosome during protein synthesis, or as a result of ribosome stalling. In terms of biological role, catalyzes the release of premature peptidyl moieties from peptidyl-tRNA molecules trapped in stalled 50S ribosomal subunits, and thus maintains levels of free tRNAs and 50S ribosomes. The sequence is that of Peptidyl-tRNA hydrolase from Acinetobacter baumannii (strain AB307-0294).